The primary structure comprises 246 residues: Uridylate kinase (246 aa).

An ATP-binding site is contributed by 20–23 (KISG). Positions 28–33 (GDQGYG) are involved in allosteric activation by GTP. Gly62 provides a ligand contact to UMP. Residues Gly63 and Arg67 each coordinate ATP. UMP-binding positions include Asp82 and 143–150 (TGNPYFTT). Residues Thr170, Tyr176, and Asp179 each coordinate ATP.

This sequence belongs to the UMP kinase family. In terms of assembly, homohexamer.

The protein localises to the cytoplasm. It catalyses the reaction UMP + ATP = UDP + ADP. The protein operates within pyrimidine metabolism; CTP biosynthesis via de novo pathway; UDP from UMP (UMPK route): step 1/1. With respect to regulation, allosterically activated by GTP. Inhibited by UTP. In terms of biological role, catalyzes the reversible phosphorylation of UMP to UDP. The protein is Uridylate kinase of Cereibacter sphaeroides (strain ATCC 17025 / ATH 2.4.3) (Rhodobacter sphaeroides).